Consider the following 1026-residue polypeptide: Tyrosine-protein phosphatase 1 (1026 aa).

An FERM domain is found at 29–315 (IRCTVTFLDS…EQHTFFRLKT (287 aa)). Disordered stretches follow at residues 376 to 396 (SIDS…LPSS), 430 to 456 (PLTT…SLRQ), 489 to 515 (GIHA…KSAN), and 584 to 616 (SFAS…DQVV). Residues 446–456 (DSESSAPSLRQ) show a composition bias toward polar residues. Low complexity predominate over residues 600–609 (SPQSNKSSSP). One can recognise a PDZ domain in the interval 617 to 689 (TIKMRPDRHG…DHVVQFIRSA (73 aa)). The 259-residue stretch at 753 to 1011 (VVDHFEMLYR…TFVCESILRA (259 aa)) folds into the Tyrosine-protein phosphatase domain. Residues D920, 952–958 (CSAGIGR), and Q996 contribute to the substrate site. The Phosphocysteine intermediate role is filled by C952.

It belongs to the protein-tyrosine phosphatase family. Non-receptor class subfamily.

Its subcellular location is the cytoplasm. It is found in the cytoskeleton. It catalyses the reaction O-phospho-L-tyrosyl-[protein] + H2O = L-tyrosyl-[protein] + phosphate. In Caenorhabditis elegans, this protein is Tyrosine-protein phosphatase 1 (ptp-1).